The following is a 201-amino-acid chain: Histidinol dehydrogenase (201 aa).

The protein belongs to the histidinol dehydrogenase family. In terms of assembly, homodimer. Zn(2+) serves as cofactor.

It catalyses the reaction L-histidinol + 2 NAD(+) + H2O = L-histidine + 2 NADH + 3 H(+). It functions in the pathway amino-acid biosynthesis; L-histidine biosynthesis; L-histidine from 5-phospho-alpha-D-ribose 1-diphosphate: step 9/9. Catalyzes the sequential NAD-dependent oxidations of L-histidinol to L-histidinaldehyde and then to L-histidine. This Buchnera aphidicola subsp. Melaphis rhois protein is Histidinol dehydrogenase (hisD).